The chain runs to 83 residues: CLAVATA3/ESR (CLE)-related protein 3 (83 aa).

A signal peptide spans 1–24 (MASLKLWVCLVLLLVLELTSVHEC). Residues 38-58 (RLKKIRRELFERLKEMKGRSE) are a coiled coil. Positions 53 to 83 (MKGRSEGEETILGNTLDSKRLSPGGPDPRHH) are disordered. P75 and P78 each carry hydroxyproline. The O-linked (Ara...) hydroxyproline glycan is linked to P78.

Belongs to the CLV3/ESR signal peptide family. The O-glycosylation (arabinosylation) of the hydroxyproline Pro-78 enhances binding affinity of the CLE3p peptide for its receptor. In terms of tissue distribution, mostly expressed in roots, stems and apex, and, to a lower extent, in seedlings, leaves, flowers, siliques and pollen.

It localises to the secreted. The protein resides in the extracellular space. Extracellular signal peptide that regulates cell fate. The protein is CLAVATA3/ESR (CLE)-related protein 3 of Arabidopsis thaliana (Mouse-ear cress).